Consider the following 573-residue polypeptide: Trehalose synthase (573 aa).

Asp70 provides a ligand contact to substrate. Asn112 serves as a coordination point for Ca(2+). Substrate is bound by residues His113 and Gln178. Asp180 is a binding site for Ca(2+). Arg208 provides a ligand contact to substrate. The active-site Nucleophile is the Asp210. Residues Tyr214, Leu215, and Glu217 each contribute to the Ca(2+) site. Catalysis depends on Glu252, which acts as the Proton donor. Substrate contacts are provided by His326 and Asp327.

This sequence belongs to the glycosyl hydrolase 13 family. TreS subfamily.

The enzyme catalyses D-maltose = alpha,alpha-trehalose. In terms of biological role, catalyzes the reversible interconversion of maltose and alpha,alpha-trehalose by transglucosylation. The sequence is that of Trehalose synthase (treS) from Pimelobacter sp. (strain R48).